The following is a 715-amino-acid chain: Protein naked cuticle homolog (715 aa).

The EF-hand domain maps to lysine 18 to serine 53. The interval serine 256–proline 282 is disordered. Basic residues predominate over residues arginine 257 to serine 273. A required for nuclear localization and inhibition of Wnt signaling region spans residues glutamate 305–asparagine 334. The disordered stretch occupies residues glutamate 639–threonine 690. Low complexity-rich tracts occupy residues glutamine 642 to proline 664 and glycine 673 to threonine 690.

It belongs to the NKD family.

It localises to the cell membrane. It is found in the cytoplasm. Its subcellular location is the nucleus. In terms of biological role, cell autonomous antagonist of the canonical Wnt signaling pathway. May activate a second Wnt signaling pathway that controls planar cell polarity. Required for neuroblast specification. The protein is Protein naked cuticle homolog of Aedes aegypti (Yellowfever mosquito).